An 89-amino-acid chain; its full sequence is Small ribosomal subunit protein uS14 (89 aa).

The protein belongs to the universal ribosomal protein uS14 family. As to quaternary structure, part of the 30S ribosomal subunit. Contacts proteins S3 and S10.

Binds 16S rRNA, required for the assembly of 30S particles and may also be responsible for determining the conformation of the 16S rRNA at the A site. The chain is Small ribosomal subunit protein uS14 from Exiguobacterium sibiricum (strain DSM 17290 / CCUG 55495 / CIP 109462 / JCM 13490 / 255-15).